The sequence spans 289 residues: Testis-expressed protein 26 (289 aa).

Positions 1-26 (MEQPGPRAPDPSLCHHNLQPTDDPNW) are disordered. 5 mn regions span residues 30–42 (ATTM…PKTG), 69–83 (QTQY…SHSK), 144–157 (ISLT…RSKA), 179–193 (DTEF…AKIP), and 233–247 (QTTY…YPDF).

This Homo sapiens (Human) protein is Testis-expressed protein 26 (TEX26).